The chain runs to 112 residues: Nitrogen regulatory protein P-II (112 aa).

Tyr-51 carries the post-translational modification O-UMP-tyrosine.

Belongs to the P(II) protein family. In terms of assembly, homotrimer.

In nitrogen-limiting conditions, when the ratio of Gln to 2-ketoglutarate decreases, P-II is uridylylated to P-II-UMP. P-II-UMP allows the deadenylation of glutamine synthetase (GS), thus activating the enzyme. Conversely, in nitrogen excess P-II is deuridylated and promotes the adenylation of GS. P-II indirectly controls the transcription of the GS gene (glnA). P-II prevents NR-II-catalyzed conversion of NR-I to NR-I-phosphate, the transcriptional activator of glnA. When P-II is uridylylated to P-II-UMP, these events are reversed. This chain is Nitrogen regulatory protein P-II (glnB), found in Rhizobium meliloti (strain 1021) (Ensifer meliloti).